A 196-amino-acid chain; its full sequence is Small ribosomal subunit protein uS4c (196 aa).

Residues 16 to 36 (GALPGLTRKTPKSGSNLKKKF) form a disordered region. An S4 RNA-binding domain is found at 89–169 (MRLDNILFRL…LPKHLTIDTL (81 aa)).

It belongs to the universal ribosomal protein uS4 family. As to quaternary structure, part of the 30S ribosomal subunit. Contacts protein S5. The interaction surface between S4 and S5 is involved in control of translational fidelity.

The protein localises to the plastid. It localises to the chloroplast. One of the primary rRNA binding proteins, it binds directly to 16S rRNA where it nucleates assembly of the body of the 30S subunit. Functionally, with S5 and S12 plays an important role in translational accuracy. In Brachypodium pinnatum (Tor grass), this protein is Small ribosomal subunit protein uS4c (rps4).